Consider the following 538-residue polypeptide: Nicotinate phosphoribosyltransferase (538 aa).

Nicotinate-binding residues include Y21 and T210. H213 is subject to Phosphohistidine. Residue R318 participates in nicotinate binding. T380 serves as a coordination point for 5-phospho-alpha-D-ribose 1-diphosphate.

This sequence belongs to the NAPRTase family. In terms of assembly, homodimer. Mg(2+) is required as a cofactor. Requires Mn(2+) as cofactor. In terms of processing, transiently phosphorylated on a His residue during the reaction cycle. Phosphorylation strongly increases the affinity for substrates and increases the rate of nicotinate D-ribonucleotide production. Dephosphorylation regenerates the low-affinity form of the enzyme, leading to product release. Abundantly expressed in the small intestine, liver and kidney.

It localises to the cytoplasm. The protein resides in the cytosol. It catalyses the reaction nicotinate + 5-phospho-alpha-D-ribose 1-diphosphate + ATP + H2O = nicotinate beta-D-ribonucleotide + ADP + phosphate + diphosphate. It functions in the pathway cofactor biosynthesis; NAD(+) biosynthesis; nicotinate D-ribonucleotide from nicotinate: step 1/1. In terms of biological role, catalyzes the first step in the biosynthesis of NAD from nicotinic acid, the ATP-dependent synthesis of beta-nicotinate D-ribonucleotide from nicotinate and 5-phospho-D-ribose 1-phosphate. Helps prevent cellular oxidative stress via its role in NAD biosynthesis. This is Nicotinate phosphoribosyltransferase (Naprt) from Mus musculus (Mouse).